The sequence spans 252 residues: Ubiquinone biosynthesis O-methyltransferase (252 aa).

S-adenosyl-L-methionine-binding residues include R41, G72, D93, and M136.

Belongs to the methyltransferase superfamily. UbiG/COQ3 family.

It catalyses the reaction a 3-demethylubiquinol + S-adenosyl-L-methionine = a ubiquinol + S-adenosyl-L-homocysteine + H(+). The enzyme catalyses a 3-(all-trans-polyprenyl)benzene-1,2-diol + S-adenosyl-L-methionine = a 2-methoxy-6-(all-trans-polyprenyl)phenol + S-adenosyl-L-homocysteine + H(+). It functions in the pathway cofactor biosynthesis; ubiquinone biosynthesis. O-methyltransferase that catalyzes the 2 O-methylation steps in the ubiquinone biosynthetic pathway. The protein is Ubiquinone biosynthesis O-methyltransferase of Rhizobium leguminosarum bv. trifolii (strain WSM2304).